Reading from the N-terminus, the 244-residue chain is Eukaryotic translation initiation factor 4E type 1B (244 aa).

A compositionally biased stretch (basic and acidic residues) spans Met1 to Ser26. The disordered stretch occupies residues Met1–Pro57. An EIF4EBP1/2/3 binding region spans residues His65 to Gln68. Trp84–Gln85 serves as a coordination point for mRNA. The interval Trp101–Ser105 is EIF4EBP1/2/3 binding. Residue Trp130–Glu131 coordinates mRNA. The tract at residues Glu160–Gly167 is EIF4EBP1/2/3 binding. MRNA-binding positions include Arg185–Lys190 and Ala233–Ser235.

This sequence belongs to the eukaryotic initiation factor 4E family. EIF4F is a multi-subunit complex, the composition of which varies with external and internal environmental conditions. It is composed of at least EIF4A, EIF4E and EIF4G.

Recognizes and binds the 7-methylguanosine-containing mRNA cap during an early step in the initiation of protein synthesis and facilitates ribosome binding by inducing the unwinding of the mRNAs secondary structures. This chain is Eukaryotic translation initiation factor 4E type 1B (Eif4e1b), found in Mus musculus (Mouse).